A 299-amino-acid polypeptide reads, in one-letter code: ATP phosphoribosyltransferase (299 aa).

Belongs to the ATP phosphoribosyltransferase family. Long subfamily. The cofactor is Mg(2+).

It is found in the cytoplasm. It catalyses the reaction 1-(5-phospho-beta-D-ribosyl)-ATP + diphosphate = 5-phospho-alpha-D-ribose 1-diphosphate + ATP. It participates in amino-acid biosynthesis; L-histidine biosynthesis; L-histidine from 5-phospho-alpha-D-ribose 1-diphosphate: step 1/9. Its activity is regulated as follows. Feedback inhibited by histidine. In terms of biological role, catalyzes the condensation of ATP and 5-phosphoribose 1-diphosphate to form N'-(5'-phosphoribosyl)-ATP (PR-ATP). Has a crucial role in the pathway because the rate of histidine biosynthesis seems to be controlled primarily by regulation of HisG enzymatic activity. This chain is ATP phosphoribosyltransferase, found in Actinobacillus pleuropneumoniae serotype 5b (strain L20).